The sequence spans 102 residues: Small ribosomal subunit protein uS10 (102 aa).

Residues 30–58 (TGVNLSGPIPLPTKTLEIPTRKSPDGEGT) form a disordered region.

Belongs to the universal ribosomal protein uS10 family. As to quaternary structure, part of the 30S ribosomal subunit.

Involved in the binding of tRNA to the ribosomes. This chain is Small ribosomal subunit protein uS10, found in Haloquadratum walsbyi (strain DSM 16790 / HBSQ001).